The following is a 1175-amino-acid chain: Chromosome partition protein Smc (1175 aa).

32-39 lines the ATP pocket; the sequence is PNGCGKSN. The stretch at 170-504 forms a coiled coil; the sequence is VSKYKERRRE…ALKALQEKVK (335 aa). An SMC hinge domain is found at 524-625; that stretch reads LWSRIAIEPG…YTAPTLEEAL (102 aa). 2 coiled-coil regions span residues 684–918 and 944–1022; these read DESR…FQLK and SQSI…ELLS. Positions 807-849 are disordered; the sequence is RQAQEATFSRRSLEARRGELSRTIETASQQARSLADEQQRAQD. Basic and acidic residues predominate over residues 817–828; the sequence is RSLEARRGELSR. Positions 829–838 are enriched in polar residues; the sequence is TIETASQQAR. A compositionally biased stretch (basic and acidic residues) spans 840–849; that stretch reads LADEQQRAQD.

Belongs to the SMC family. As to quaternary structure, homodimer.

It is found in the cytoplasm. Functionally, required for chromosome condensation and partitioning. In Delftia acidovorans (strain DSM 14801 / SPH-1), this protein is Chromosome partition protein Smc.